The chain runs to 85 residues: MAHKKGQGSSRNGRDSPGQHRGIKVYGSEKVVAGNILVRQVGTLVHPGANVGMGKDFTLFALVDGTVKYSRARGDRRIVSILPEA.

Residues 1-22 are disordered; sequence MAHKKGQGSSRNGRDSPGQHRG.

It belongs to the bacterial ribosomal protein bL27 family.

This chain is Large ribosomal subunit protein bL27, found in Anaeromyxobacter sp. (strain Fw109-5).